The following is a 311-amino-acid chain: Pyrimidine-specific ribonucleoside hydrolase RihA (311 aa).

His-240 is an active-site residue.

It belongs to the IUNH family. RihA subfamily.

In terms of biological role, hydrolyzes cytidine or uridine to ribose and cytosine or uracil, respectively. The protein is Pyrimidine-specific ribonucleoside hydrolase RihA of Salmonella choleraesuis (strain SC-B67).